A 370-amino-acid chain; its full sequence is MNIQSNNSPNLSNNIVSKQVYYAHPPPTIDPNDPVQISFPTTEVVGHGSFGVVFATVIQETNEKVAIKKVLQDKRFKNRELEIMKMLSHINIIDLKYFFYERDSQDEIYLNLILEYMPQSLYQRLRHFVHQRTPMSRLEIKYYMFQLFKSLNYLHHFANVCHRDIKPQNLLVDPETWSLKLCDFGSAKQLKPTEPNVSYICSRYYRAPELIFGATNYTNQIDIWSSGCVMAELLLGQPMFPGESGIDQLVEIIKILGTPSKQEICSMNPNYMEHKFPQIKPIPLSRVFKKEDDQTVEFLADVLKYDPLERFNALQCLCSPYFDELKLDDGKINQITTDLKLLEFDENVELGHLSPDELSSVKKKLYPKSK.

The region spanning Phe-39–Phe-322 is the Protein kinase domain. Residues Val-45–Val-53 and Lys-68 contribute to the ATP site. Catalysis depends on Asp-164, which acts as the Proton acceptor. Tyr-199 is modified (phosphotyrosine).

It belongs to the protein kinase superfamily. CMGC Ser/Thr protein kinase family. GSK-3 subfamily. As to quaternary structure, interacts with TDA1.

It carries out the reaction L-seryl-[protein] + ATP = O-phospho-L-seryl-[protein] + ADP + H(+). It catalyses the reaction L-threonyl-[protein] + ATP = O-phospho-L-threonyl-[protein] + ADP + H(+). Its function is as follows. Serine/threonine protein kinase that is thought to function in regulating kinetochore activity and entry into meiosis. Could phosphorylate IME1. This is Serine/threonine-protein kinase RIM11/MSD1 (RIM11) from Saccharomyces cerevisiae (strain ATCC 204508 / S288c) (Baker's yeast).